Here is a 144-residue protein sequence, read N- to C-terminus: Large ribosomal subunit protein uL16 (144 aa).

The span at methionine 1–glycine 19 shows a compositional bias: basic residues. The disordered stretch occupies residues methionine 1–glycine 23.

This sequence belongs to the universal ribosomal protein uL16 family. Part of the 50S ribosomal subunit.

Functionally, binds 23S rRNA and is also seen to make contacts with the A and possibly P site tRNAs. In Staphylococcus haemolyticus (strain JCSC1435), this protein is Large ribosomal subunit protein uL16.